The following is a 106-amino-acid chain: Large ribosomal subunit protein P2 (106 aa).

The interval 79–106 is disordered; sequence GAGAVAEAKKEEPEEEEADDDMGFGLFD. The segment covering 91-100 has biased composition (acidic residues); sequence PEEEEADDDM.

The protein belongs to the eukaryotic ribosomal protein P1/P2 family. In terms of assembly, P1 and P2 exist as dimers at the large ribosomal subunit. In terms of processing, phosphorylated.

In terms of biological role, plays an important role in the elongation step of protein synthesis. This Leishmania infantum protein is Large ribosomal subunit protein P2 (LIP).